Here is a 184-residue protein sequence, read N- to C-terminus: Crossover junction endodeoxyribonuclease RuvC (184 aa).

Catalysis depends on residues Asp-7, Glu-68, and Asp-141. Mg(2+) is bound by residues Asp-7, Glu-68, and Asp-141.

Belongs to the RuvC family. In terms of assembly, homodimer which binds Holliday junction (HJ) DNA. The HJ becomes 2-fold symmetrical on binding to RuvC with unstacked arms; it has a different conformation from HJ DNA in complex with RuvA. In the full resolvosome a probable DNA-RuvA(4)-RuvB(12)-RuvC(2) complex forms which resolves the HJ. The cofactor is Mg(2+).

Its subcellular location is the cytoplasm. It carries out the reaction Endonucleolytic cleavage at a junction such as a reciprocal single-stranded crossover between two homologous DNA duplexes (Holliday junction).. In terms of biological role, the RuvA-RuvB-RuvC complex processes Holliday junction (HJ) DNA during genetic recombination and DNA repair. Endonuclease that resolves HJ intermediates. Cleaves cruciform DNA by making single-stranded nicks across the HJ at symmetrical positions within the homologous arms, yielding a 5'-phosphate and a 3'-hydroxyl group; requires a central core of homology in the junction. The consensus cleavage sequence is 5'-(A/T)TT(C/G)-3'. Cleavage occurs on the 3'-side of the TT dinucleotide at the point of strand exchange. HJ branch migration catalyzed by RuvA-RuvB allows RuvC to scan DNA until it finds its consensus sequence, where it cleaves and resolves the cruciform DNA. The protein is Crossover junction endodeoxyribonuclease RuvC of Mycobacterium ulcerans (strain Agy99).